Consider the following 217-residue polypeptide: Uracil-DNA glycosylase (217 aa).

Catalysis depends on Asp62, which acts as the Proton acceptor.

It belongs to the uracil-DNA glycosylase (UDG) superfamily. UNG family.

The protein resides in the cytoplasm. The enzyme catalyses Hydrolyzes single-stranded DNA or mismatched double-stranded DNA and polynucleotides, releasing free uracil.. In terms of biological role, excises uracil residues from the DNA which can arise as a result of misincorporation of dUMP residues by DNA polymerase or due to deamination of cytosine. The chain is Uracil-DNA glycosylase from Streptococcus pyogenes serotype M6 (strain ATCC BAA-946 / MGAS10394).